The sequence spans 377 residues: Nitric oxide reductase FlRd-NAD(+) reductase (377 aa).

The protein belongs to the FAD-dependent oxidoreductase family. FAD serves as cofactor.

The protein resides in the cytoplasm. It carries out the reaction 2 reduced [nitric oxide reductase rubredoxin domain] + NAD(+) + H(+) = 2 oxidized [nitric oxide reductase rubredoxin domain] + NADH. It participates in nitrogen metabolism; nitric oxide reduction. In terms of biological role, one of at least two accessory proteins for anaerobic nitric oxide (NO) reductase. Reduces the rubredoxin moiety of NO reductase. This Escherichia coli O9:H4 (strain HS) protein is Nitric oxide reductase FlRd-NAD(+) reductase.